A 97-amino-acid chain; its full sequence is Citrate lyase acyl carrier protein (97 aa).

S14 carries the O-(phosphoribosyl dephospho-coenzyme A)serine modification.

The protein belongs to the CitD family. In terms of assembly, oligomer with a subunit composition of (alpha,beta,gamma)6.

It is found in the cytoplasm. Its function is as follows. Covalent carrier of the coenzyme of citrate lyase. The polypeptide is Citrate lyase acyl carrier protein (Oenococcus oeni (strain ATCC BAA-331 / PSU-1)).